A 628-amino-acid chain; its full sequence is EF-hand calcium-binding domain-containing protein 7 (628 aa).

The span at 1–22 (MASNPGSDAALGTQNPLLSGSP) shows a compositional bias: polar residues. The tract at residues 1–24 (MASNPGSDAALGTQNPLLSGSPRT) is disordered. 2 consecutive EF-hand domains span residues 102-137 (TSKAELLKSFKKLDVNDDGAILHSDLQKYLTKRGEK) and 138-173 (MTQEEVNAVINLADINANGKFDYVKFCKLYMTTSEQ). Residues 192–231 (QFGSHMEGSPERGPSPAPKPSPRVIRKNDQETFSSKGDTS) are disordered. Phosphoserine is present on residues Ser200 and Ser212. A compositionally biased stretch (polar residues) spans 222 to 231 (ETFSSKGDTS). One can recognise an EF-hand 3 domain in the interval 402–437 (EFRSTLSEIFEVIDLDGNGLISLEEYNFFELRTSGE). The Ca(2+) site is built by Asp415, Asp417, Asn419, and Glu426.

Component of the EvC complex composed of EFCAB7, IQCE, EVC2 and EVC; built from two subcomplexes, EVC2:EVC and EFCAB7:IQCE. Interacts (via EF-hand 1 and 2) with IQCE (via N-terminus); this interaction anchors the EVC-EVC2 complex in a signaling microdomain at the base of cilia and stimulates the Hedgehog (Hh) pathway. Interacts with EVC2 (via N-terminal end). Interacts with EVC.

It is found in the cell projection. The protein resides in the cilium membrane. Functionally, component of the EvC complex that positively regulates ciliary Hedgehog (Hh) signaling. Required for the localization of the EVC2:EVC subcomplex at the base of primary cilia. In Mus musculus (Mouse), this protein is EF-hand calcium-binding domain-containing protein 7 (Efcab7).